The sequence spans 235 residues: UPF0702 transmembrane protein YdfS (235 aa).

2 consecutive transmembrane segments (helical) span residues 32 to 52 and 60 to 80; these read MTIFDFIAAITLGAIAAGLAY and NMAISFSIFVLTIFLISFLSI.

The protein belongs to the UPF0702 family.

Its subcellular location is the cell membrane. The polypeptide is UPF0702 transmembrane protein YdfS (ydfS) (Bacillus subtilis (strain 168)).